We begin with the raw amino-acid sequence, 146 residues long: Probable NADH dehydrogenase [ubiquinone] 1 alpha subcomplex subunit 12 (146 aa).

The protein belongs to the complex I NDUFA12 subunit family. Complex I is composed of 45 different subunits.

The protein localises to the mitochondrion inner membrane. Functionally, accessory subunit of the mitochondrial membrane respiratory chain NADH dehydrogenase (Complex I), that is believed not to be involved in catalysis. Complex I functions in the transfer of electrons from NADH to the respiratory chain. The immediate electron acceptor for the enzyme is believed to be ubiquinone. The polypeptide is Probable NADH dehydrogenase [ubiquinone] 1 alpha subcomplex subunit 12 (Caenorhabditis elegans).